The primary structure comprises 348 residues: Rhodopsin (348 aa).

Position 1 is an N-acetylmethionine (Met1). Residues 1 to 36 (MNGTEGLNFYVPFSNKTGVVRSPFEYPQYYLAEPWQ) lie on the Extracellular side of the membrane. N-linked (GlcNAc...) asparagine glycosylation is found at Asn2 and Asn15. Residues 37–61 (FSVLAAYMFLLIVLGFPINFLTLYV) traverse the membrane as a helical segment. Over 62–73 (TVQHKKLRTPLN) the chain is Cytoplasmic. Residues 74-99 (YILLNLAVANLFMVFGGFTTTLYTSL) form a helical membrane-spanning segment. Residues 100–111 (HAYFVFGPTGCN) are Extracellular-facing. The cysteines at positions 110 and 187 are disulfide-linked. A helical transmembrane segment spans residues 112–133 (LEGFFATLGGEIALWSLVVLAI). Residues 134–136 (ERY) carry the 'Ionic lock' involved in activated form stabilization motif. Topologically, residues 134 to 152 (ERYVVVCKPMSNFRFGENH) are cytoplasmic. The chain crosses the membrane as a helical span at residues 153–173 (AIMGLALTWIMAMACAAAPLV). The Extracellular segment spans residues 174–202 (GWSRYIPEGMQCSCGIDYYTSRQEVNNES). Position 201 (Glu201) interacts with Zn(2+). Residues 203 to 227 (FVIYMFVVHFTIPLVIIFFCYGQLV) traverse the membrane as a helical segment. Residues 228-252 (FTVKEAAAQQQESATTQKAEKEVTR) lie on the Cytoplasmic side of the membrane. The chain crosses the membrane as a helical span at residues 253 to 274 (MVIIMVVAFLICWVPYASVAFY). Residues 275-286 (IFTHQGSDFGPI) are Extracellular-facing. Gln279 is a binding site for Zn(2+). A helical membrane pass occupies residues 287-306 (FMTIPSFFAKSSSIYNPVIY). The residue at position 296 (Lys296) is an N6-(retinylidene)lysine. At 307 to 348 (IMMNKQFRNCMLTTLCCGRNPLGDDEASTTASKTETSQVAPA) the chain is on the cytoplasmic side. S-palmitoyl cysteine attachment occurs at residues Cys322 and Cys323. Ser334 is subject to Phosphoserine. 2 positions are modified to phosphothreonine: Thr335 and Thr336. Residue Ser338 is modified to Phosphoserine. Phosphothreonine occurs at positions 340 and 342. At Ser343 the chain carries Phosphoserine.

The protein belongs to the G-protein coupled receptor 1 family. Opsin subfamily. In terms of assembly, homodimer. May form a complex composed of RHO, GRK1 and RCVRN in a Ca(2+)-dependent manner; RCVRN prevents the interaction between GRK1 and RHO. Interacts with GRK1. Interacts (phosphorylated form) with SAG. Interacts with GNAT1. Interacts with GNAT3. SAG and G-proteins compete for a common binding site. Interacts with PRCD; the interaction promotes PRCD stability. Forms a complex with ASAP1 and ARF4. Forms a complex with ASAP1, RAB11A, Rabin8/RAB3IP, ARF4 and RAB11FIP3; the complex regulates Golgi-to-cilia rhodopsin/RHO transport in photoreceptors. Post-translationally, contains one covalently linked retinal chromophore. Upon light absorption, the covalently bound 11-cis-retinal is converted to all-trans-retinal. After hydrolysis of the Schiff base and release of the covalently bound all-trans-retinal, active rhodopsin is regenerated by binding of a fresh molecule of 11-cis-retinal.

It is found in the membrane. It localises to the cell projection. Its subcellular location is the cilium. The protein resides in the photoreceptor outer segment. Photoreceptor required for image-forming vision at low light intensity. Light-induced isomerization of 11-cis to all-trans retinal triggers a conformational change that activates signaling via G-proteins. Signaling mediates the activation of phospholipase C. Subsequent receptor phosphorylation mediates displacement of the bound G-protein alpha subunit by arrestin and terminates signaling. This is Rhodopsin (RHO) from Tursiops truncatus (Atlantic bottle-nosed dolphin).